Here is a 301-residue protein sequence, read N- to C-terminus: Putative S-adenosyl-L-methionine-dependent methyltransferase MUL_0450 (301 aa).

S-adenosyl-L-methionine-binding positions include Asp127 and 156–157 (DL).

The protein belongs to the UPF0677 family.

Functionally, exhibits S-adenosyl-L-methionine-dependent methyltransferase activity. This chain is Putative S-adenosyl-L-methionine-dependent methyltransferase MUL_0450, found in Mycobacterium ulcerans (strain Agy99).